A 126-amino-acid chain; its full sequence is MSKSKTPNFDDMEVLDDTNDEYDDSESEWIDLDRGESVVGEIREINPDCGDYGTTVLELSRGLGDNVCMWSNRQIDNKIEQHGLGVGEVVGIKHTDREQTFTPDGSDEPVKFDVYEVRAVNVGGND.

Positions 1–27 are disordered; sequence MSKSKTPNFDDMEVLDDTNDEYDDSES. Over residues 10-27 the composition is skewed to acidic residues; the sequence is DDMEVLDDTNDEYDDSES.

This is an uncharacterized protein from Halorubrum sp. PV6 (HRPV-1).